The sequence spans 346 residues: uncharacterized protein (346 aa).

This is an uncharacterized protein from Mycoplasma genitalium (strain ATCC 33530 / DSM 19775 / NCTC 10195 / G37) (Mycoplasmoides genitalium).